Reading from the N-terminus, the 140-residue chain is 3-hydroxyacyl-[acyl-carrier-protein] dehydratase FabZ (140 aa).

Residue H48 is part of the active site.

This sequence belongs to the thioester dehydratase family. FabZ subfamily.

It localises to the cytoplasm. It catalyses the reaction a (3R)-hydroxyacyl-[ACP] = a (2E)-enoyl-[ACP] + H2O. Functionally, involved in unsaturated fatty acids biosynthesis. Catalyzes the dehydration of short chain beta-hydroxyacyl-ACPs and long chain saturated and unsaturated beta-hydroxyacyl-ACPs. The chain is 3-hydroxyacyl-[acyl-carrier-protein] dehydratase FabZ from Latilactobacillus sakei subsp. sakei (strain 23K) (Lactobacillus sakei subsp. sakei).